Consider the following 226-residue polypeptide: PKHD-type hydroxylase Abu_0724 (226 aa).

The Fe2OG dioxygenase domain occupies 78–178 (HIISPFFNKY…RMVSFMWIQS (101 aa)). Histidine 96, aspartate 98, and histidine 159 together coordinate Fe cation. Residue arginine 169 coordinates 2-oxoglutarate.

The cofactor is Fe(2+). L-ascorbate is required as a cofactor.

The chain is PKHD-type hydroxylase Abu_0724 from Aliarcobacter butzleri (strain RM4018) (Arcobacter butzleri).